The chain runs to 75 residues: uncharacterized protein (75 aa).

This is an uncharacterized protein from Escherichia coli (Bacteriophage T4).